We begin with the raw amino-acid sequence, 306 residues long: Triplex capsid protein 2 (306 aa).

This sequence belongs to the herpesviridae TRX2 protein family. In terms of assembly, interacts with TRX1 and major capisd protein/MCP.

Its subcellular location is the virion. It localises to the host nucleus. In terms of biological role, structural component of the T=16 icosahedral capsid. The capsid is composed of pentamers and hexamers of major capsid protein/MCP, which are linked together by heterotrimers called triplexes. These triplexes are formed by a single molecule of triplex protein 1/TRX1 and two copies of triplex protein 2/TRX2. Additionally, TRX1 is required for efficient transport of TRX2 to the nucleus, which is the site of capsid assembly. The polypeptide is Triplex capsid protein 2 (Human cytomegalovirus (strain AD169) (HHV-5)).